We begin with the raw amino-acid sequence, 215 residues long: Small ribosomal subunit protein uS7 (215 aa).

Belongs to the universal ribosomal protein uS7 family. Part of the 30S ribosomal subunit.

One of the primary rRNA binding proteins, it binds directly to 16S rRNA where it nucleates assembly of the head domain of the 30S subunit. Is located at the subunit interface close to the decoding center. The chain is Small ribosomal subunit protein uS7 from Thermococcus kodakarensis (strain ATCC BAA-918 / JCM 12380 / KOD1) (Pyrococcus kodakaraensis (strain KOD1)).